The following is a 349-amino-acid chain: tRNA N6-adenosine threonylcarbamoyltransferase (349 aa).

Fe cation-binding residues include histidine 118 and histidine 122. Residues 141-145 (LVSGG), aspartate 174, glycine 187, and asparagine 280 each bind substrate. Aspartate 308 is a binding site for Fe cation.

The protein belongs to the KAE1 / TsaD family. Requires Fe(2+) as cofactor.

The protein resides in the cytoplasm. The enzyme catalyses L-threonylcarbamoyladenylate + adenosine(37) in tRNA = N(6)-L-threonylcarbamoyladenosine(37) in tRNA + AMP + H(+). Its function is as follows. Required for the formation of a threonylcarbamoyl group on adenosine at position 37 (t(6)A37) in tRNAs that read codons beginning with adenine. Is involved in the transfer of the threonylcarbamoyl moiety of threonylcarbamoyl-AMP (TC-AMP) to the N6 group of A37, together with TsaE and TsaB. TsaD likely plays a direct catalytic role in this reaction. This is tRNA N6-adenosine threonylcarbamoyltransferase from Acidovorax sp. (strain JS42).